Here is a 428-residue protein sequence, read N- to C-terminus: Glutamyl-tRNA reductase (428 aa).

Substrate is bound by residues 50-53 (TCNR), Ser-110, 115-117 (ETQ), and Gln-121. Cys-51 (nucleophile) is an active-site residue. An NADP(+)-binding site is contributed by 190-195 (GAGEMG).

Belongs to the glutamyl-tRNA reductase family. Homodimer.

The catalysed reaction is (S)-4-amino-5-oxopentanoate + tRNA(Glu) + NADP(+) = L-glutamyl-tRNA(Glu) + NADPH + H(+). It functions in the pathway porphyrin-containing compound metabolism; protoporphyrin-IX biosynthesis; 5-aminolevulinate from L-glutamyl-tRNA(Glu): step 1/2. In terms of biological role, catalyzes the NADPH-dependent reduction of glutamyl-tRNA(Glu) to glutamate 1-semialdehyde (GSA). The polypeptide is Glutamyl-tRNA reductase (Campylobacter curvus (strain 525.92)).